A 185-amino-acid chain; its full sequence is MGKLFEEKTIKTEQIFSGRVVKLQVDDVELPNGQTSKREIVRHPGAVAVIAITNENKIVMVEQYRKPLEKSIVEIPAGKLEKGEDPRVTALRELEEETGYECEQMEWLISFATSPGFADEIIHLYVAKGLSKKENAAGLDEDEFVDLIELTLDEALQYIKEKRIYDSKTVIAVQYLQLQEALKHK.

Belongs to the Nudix hydrolase family. In terms of assembly, homodimer. Mg(2+) serves as cofactor.

In terms of biological role, involved in the activation of the NAD-dependent methanol dehydrogenase (MDH). MDH activation by Act involves hydrolytic removal of the nicotinamide mononucleotide (NMN) moiety of the NAD cofactor, changing its ping-pong type of reaction mechanism into a ternary complex reaction mechanism. It requires the presence of magnesium ions and is also able to use ADP-ribose. This chain is Methanol dehydrogenase activator, found in Bacillus methanolicus.